The following is a 1508-amino-acid chain: uncharacterized protein (1508 aa).

Residues Ala-149 to Thr-267 adopt a coiled-coil conformation. Disordered regions lie at residues Glu-248–Glu-268, Ser-345–Ser-403, Phe-536–Leu-575, Gly-725–His-754, and Glu-868–Trp-916. Residues Glu-868 to Gly-881 show a composition bias toward basic and acidic residues. Residues Ile-972–Ala-1034 are a coiled coil. 2 disordered regions span residues Leu-1158–Arg-1186 and Lys-1204–Pro-1246. Residues Thr-1163–Ser-1172 show a composition bias toward polar residues. Positions Lys-1204–Pro-1215 are enriched in basic and acidic residues. Positions Ala-1220–Asn-1230 are enriched in polar residues. Residues His-1271–Ala-1302 adopt a coiled-coil conformation.

This is an uncharacterized protein from Homo sapiens (Human).